The chain runs to 135 residues: C-type lectin PAL (135 aa).

4 cysteine pairs are disulfide-bonded: Cys3-Cys14, Cys31-Cys131, Cys38-Cys133, and Cys106-Cys123. The region spanning 10–132 (MNGLCYKIFD…CGSKNAFLCQ (123 aa)) is the C-type lectin domain. Ca(2+) contacts are provided by Gln96, Asp98, Glu104, Asn119, and Asp120. The short motif at 96–98 (QPD) is the Galactose-binding element.

It belongs to the true venom lectin family. As to quaternary structure, homodimer; disulfide-linked. In terms of tissue distribution, expressed by the venom gland.

It localises to the secreted. Galactose-binding lectin which recognizes specific carbohydrate structures and agglutinates a variety of animal cells by binding to cell-surface glycoproteins and glycolipids. This is a calcium-dependent lectin. Shows high hemagglutinating activity (MHC is 0.25 ug/ml on rabbit erythrocytes). The polypeptide is C-type lectin PAL (Bitis arietans (African puff adder)).